The primary structure comprises 494 residues: Aspartyl/glutamyl-tRNA(Asn/Gln) amidotransferase subunit B (494 aa).

Belongs to the GatB/GatE family. GatB subfamily. In terms of assembly, heterotrimer of A, B and C subunits.

It carries out the reaction L-glutamyl-tRNA(Gln) + L-glutamine + ATP + H2O = L-glutaminyl-tRNA(Gln) + L-glutamate + ADP + phosphate + H(+). The catalysed reaction is L-aspartyl-tRNA(Asn) + L-glutamine + ATP + H2O = L-asparaginyl-tRNA(Asn) + L-glutamate + ADP + phosphate + 2 H(+). Its function is as follows. Allows the formation of correctly charged Asn-tRNA(Asn) or Gln-tRNA(Gln) through the transamidation of misacylated Asp-tRNA(Asn) or Glu-tRNA(Gln) in organisms which lack either or both of asparaginyl-tRNA or glutaminyl-tRNA synthetases. The reaction takes place in the presence of glutamine and ATP through an activated phospho-Asp-tRNA(Asn) or phospho-Glu-tRNA(Gln). This chain is Aspartyl/glutamyl-tRNA(Asn/Gln) amidotransferase subunit B, found in Synechococcus sp. (strain CC9902).